We begin with the raw amino-acid sequence, 306 residues long: Proline-rich transmembrane protein 1 (306 aa).

A disordered region spans residues 1 to 142 (MSSEKSGLPD…PPPAPAQTAQ (142 aa)). The Cytoplasmic segment spans residues 1-223 (MSSEKSGLPD…LEPRRPPHDY (223 aa)). Positions 15–36 (TSPPPYNAPQPPAEPPAPPPQA) are enriched in pro residues. The span at 40–49 (SHHHHHHHYH) shows a compositional bias: basic residues. 2 stretches are compositionally biased toward pro residues: residues 87 to 111 (HAPP…PPDP) and 121 to 137 (PLPP…PPAP). A helical transmembrane segment spans residues 224 to 244 (MPIAVLTTICCFWPTGIIAIF). Topologically, residues 245–275 (KAVQVRTALARGDMVSAEIASREARNFSFIS) are extracellular. Positions 276 to 296 (LAVGIAAMVLCTILTVVIIIA) form an intramembrane region, helical. Topologically, residues 297–306 (AQHHENYWDP) are extracellular.

Belongs to the CD225/Dispanin family. Component of the outer core of AMPAR complex. AMPAR complex consists of an inner core made of 4 pore-forming GluA/GRIA proteins (GRIA1, GRIA2, GRIA3 and GRIA4) and 4 major auxiliary subunits arranged in a twofold symmetry. One of the two pairs of distinct binding sites is occupied either by CNIH2, CNIH3 or CACNG2, CACNG3. The other harbors CACNG2, CACNG3, CACNG4, CACNG8 or GSG1L. This inner core of AMPAR complex is complemented by outer core constituents binding directly to the GluA/GRIA proteins at sites distinct from the interaction sites of the inner core constituents. Outer core constituents include at least PRRT1, PRRT2, CKAMP44/SHISA9, FRRS1L and NRN1. The proteins of the inner and outer core serve as a platform for other, more peripherally associated AMPAR constituents. Alone or in combination, these auxiliary subunits control the gating and pharmacology of the AMPAR complex and profoundly impact their biogenesis and protein processing.

It is found in the cell membrane. It localises to the synapse. Required to maintain a pool of extrasynaptic AMPA-regulated glutamate receptors (AMPAR) which is necessary for synapse development and function. Regulates basal AMPAR function and synaptic transmission during development but is dispensable at mature hippocampal synapses. Plays a role in regulating basal phosphorylation levels of glutamate receptor GRIA1 and promotes GRIA1 and GRIA2 cell surface expression. The polypeptide is Proline-rich transmembrane protein 1 (Homo sapiens (Human)).